The sequence spans 498 residues: ATP synthase subunit beta, chloroplastic (498 aa).

172 to 179 (GGAGVGKT) serves as a coordination point for ATP.

It belongs to the ATPase alpha/beta chains family. In terms of assembly, F-type ATPases have 2 components, CF(1) - the catalytic core - and CF(0) - the membrane proton channel. CF(1) has five subunits: alpha(3), beta(3), gamma(1), delta(1), epsilon(1). CF(0) has four main subunits: a(1), b(1), b'(1) and c(9-12).

It is found in the plastid. The protein resides in the chloroplast thylakoid membrane. It catalyses the reaction ATP + H2O + 4 H(+)(in) = ADP + phosphate + 5 H(+)(out). In terms of biological role, produces ATP from ADP in the presence of a proton gradient across the membrane. The catalytic sites are hosted primarily by the beta subunits. This is ATP synthase subunit beta, chloroplastic from Schisandra sphenanthera (Southern magnolia vine).